The chain runs to 209 residues: Uracil phosphoribosyltransferase (209 aa).

5-phospho-alpha-D-ribose 1-diphosphate-binding positions include Arg79, Arg104, and 131 to 139 (DPMLATGGS). Uracil contacts are provided by residues Ile194 and 199–201 (GDA). Asp200 is a 5-phospho-alpha-D-ribose 1-diphosphate binding site.

It belongs to the UPRTase family. Mg(2+) is required as a cofactor.

It catalyses the reaction UMP + diphosphate = 5-phospho-alpha-D-ribose 1-diphosphate + uracil. It functions in the pathway pyrimidine metabolism; UMP biosynthesis via salvage pathway; UMP from uracil: step 1/1. Its activity is regulated as follows. Allosterically activated by GTP. Its function is as follows. Catalyzes the conversion of uracil and 5-phospho-alpha-D-ribose 1-diphosphate (PRPP) to UMP and diphosphate. The protein is Uracil phosphoribosyltransferase of Streptococcus pyogenes serotype M1.